The following is a 344-amino-acid chain: Pre-mRNA polyadenylation factor fip1 (344 aa).

Disordered regions lie at residues 1–99 (MSNA…LSTA) and 230–344 (NYNT…RNRY). Polar residues predominate over residues 28–38 (VTVSNAKSPEQ). Residues 39–50 (ASEESDDSDIEF) show a composition bias toward acidic residues. Over residues 80–92 (QVEKTAVEVKTTE) the composition is skewed to basic and acidic residues. Residues 243–258 (SGAATPNAYVNNNPSS) are compositionally biased toward low complexity. The span at 271-301 (NITSSAGMTHAQPTHNPTSSYGNGASTNYNA) shows a compositional bias: polar residues. Low complexity predominate over residues 302-317 (SRPPSNHPHSSNYPSS).

Belongs to the FIP1 family.

The protein localises to the nucleus. In terms of biological role, pre-mRNA polyadenylation factor that directly interacts with poly(A) polymerase. The sequence is that of Pre-mRNA polyadenylation factor fip1 from Schizosaccharomyces pombe (strain 972 / ATCC 24843) (Fission yeast).